The primary structure comprises 855 residues: DNA mismatch repair protein MutS (855 aa).

ATP is bound at residue 621–628 (GPNMGGKS).

It belongs to the DNA mismatch repair MutS family.

Functionally, this protein is involved in the repair of mismatches in DNA. It is possible that it carries out the mismatch recognition step. This protein has a weak ATPase activity. This is DNA mismatch repair protein MutS from Francisella tularensis subsp. holarctica (strain OSU18).